We begin with the raw amino-acid sequence, 599 residues long: MANFDIDDFLRNLTPCPGVYRMLDAKGKVLYVGKAKNLKRRIKSYFRNSKLAPKIHVLVKQICDIKITVTHTENEALILESNLIKALQPRYNVLLRDDKSYPYIFLSADDFPRLGFHRGVKQVSGQYFGPYPNIRSVWQTLKLLQRVFPVRQCEDNFYRNRSRPCLQYQIKRCTAPCVGLISKKDYSQDIQHVVMFLKGRDQQVINELVIRMEEASGQLAFEQAAYYRDRIASLRQIQARQYISGEKKDIDVLGVALTEKMACVEVFFIRGGHNLGNKTFLPKLEGNLTPEELLSTFIAQYYLNRETPPILILSHQPKDMGLLTEVLSKQAGRKIALIKPVRGPKVQWIKMALANAKINLNQHLAEKSNITARFKSLQQLLSLANFPQRIECFDVSHIQGTATVASCVVFDREGPRKADYRRFNITGIIPGDDYGALRQALMRRFKKKEGVFPDLLVIDGGKGQINQSLRVLKEIGITEITVLGIAKGPERKAGNETLFLAGYENPVMVTSDSPALHILQHIRDEAHRFAIVSHRKRRAKGGKLSLLEGISGLGPKRRRKLLIQLGGLQEITRAGVEDLAQIEGISLELAQRIYDVFHR.

In terms of domain architecture, GIY-YIG spans 15 to 93 (PCPGVYRMLD…IKALQPRYNV (79 aa)). The UVR domain occupies 202–237 (QQVINELVIRMEEASGQLAFEQAAYYRDRIASLRQI).

It belongs to the UvrC family. In terms of assembly, interacts with UvrB in an incision complex.

The protein resides in the cytoplasm. Functionally, the UvrABC repair system catalyzes the recognition and processing of DNA lesions. UvrC both incises the 5' and 3' sides of the lesion. The N-terminal half is responsible for the 3' incision and the C-terminal half is responsible for the 5' incision. The sequence is that of UvrABC system protein C from Nitrosococcus oceani (strain ATCC 19707 / BCRC 17464 / JCM 30415 / NCIMB 11848 / C-107).